The following is a 487-amino-acid chain: 6-phosphogluconate dehydrogenase, decarboxylating 3, chloroplastic (487 aa).

Methionine 1 is modified (N-acetylmethionine). Residues 13–18 (GLAVMG), 36–38 (NRT), 80–82 (VKA), and asparagine 108 contribute to the NADP(+) site. Substrate is bound by residues asparagine 108 and 134–136 (SGG). Lysine 188 functions as the Proton acceptor in the catalytic mechanism. Position 191-192 (191-192 (HN)) interacts with substrate. Glutamate 195 acts as the Proton donor in catalysis. Substrate is bound by residues tyrosine 196, lysine 266, arginine 293, arginine 458, and histidine 464.

This sequence belongs to the 6-phosphogluconate dehydrogenase family. In terms of assembly, forms homodimer. Forms heterodimers with PGD1 or PGD2.

It is found in the plastid. The protein resides in the chloroplast. Its subcellular location is the cytoplasm. The protein localises to the cytosol. It carries out the reaction 6-phospho-D-gluconate + NADP(+) = D-ribulose 5-phosphate + CO2 + NADPH. It functions in the pathway carbohydrate degradation; pentose phosphate pathway; D-ribulose 5-phosphate from D-glucose 6-phosphate (oxidative stage): step 3/3. Functionally, catalyzes the oxidative decarboxylation of 6-phosphogluconate to ribulose 5-phosphate and CO(2), with concomitant reduction of NADP to NADPH. This is 6-phosphogluconate dehydrogenase, decarboxylating 3, chloroplastic from Arabidopsis thaliana (Mouse-ear cress).